The sequence spans 718 residues: U-box domain-containing protein 5 (718 aa).

The U-box domain occupies 218–292 (TLPEKFKCTL…SEWCAKNGLD (75 aa)). ARM repeat units lie at residues 493-532 (PHGPSKITSSGSLSSLLKIVESQAEHLQEQAMITLKNLSS), 534-571 (MEICLEMVSLDFIQKLTSFLQQKVFCKHSIIILKNLCS), and 573-613 (EKGR…QLCV). The interval 662–704 (KEEEEEVSSRPEGRTTASPTSQVVTPVTHPEPVKITPSPKKSG) is disordered. The segment covering 676-686 (TTASPTSQVVT) has biased composition (polar residues).

It carries out the reaction S-ubiquitinyl-[E2 ubiquitin-conjugating enzyme]-L-cysteine + [acceptor protein]-L-lysine = [E2 ubiquitin-conjugating enzyme]-L-cysteine + N(6)-ubiquitinyl-[acceptor protein]-L-lysine.. Its pathway is protein modification; protein ubiquitination. Its function is as follows. Functions as an E3 ubiquitin ligase. The chain is U-box domain-containing protein 5 (PUB5) from Arabidopsis thaliana (Mouse-ear cress).